Reading from the N-terminus, the 358-residue chain is Mitogen-activated protein kinase hog-1 (358 aa).

The Protein kinase domain occupies 20–299 (YSDLQPVGMG…ATEALSHEYL (280 aa)). ATP is bound by residues 26–34 (VGMGAFGLV) and Lys-49. Asp-141 acts as the Proton acceptor in catalysis. Phosphothreonine is present on Thr-171. The short motif at 171–173 (TGY) is the TXY element. Tyr-173 bears the Phosphotyrosine mark.

This sequence belongs to the protein kinase superfamily. Ser/Thr protein kinase family. MAP kinase subfamily. HOG1 sub-subfamily. The cofactor is Mg(2+). Dually phosphorylated on Thr-171 and Tyr-173, which activates the enzyme. Phosphorylation is induced by fungicides and osmotic stress.

The protein resides in the cytoplasm. The protein localises to the nucleus. It catalyses the reaction L-seryl-[protein] + ATP = O-phospho-L-seryl-[protein] + ADP + H(+). The enzyme catalyses L-threonyl-[protein] + ATP = O-phospho-L-threonyl-[protein] + ADP + H(+). With respect to regulation, activated by tyrosine and threonine phosphorylation. In terms of biological role, proline-directed serine/threonine-protein kinase involved in a signal transduction pathway that is activated by changes in the osmolarity of the extracellular environment. Controls osmotic regulation of transcription of target genes. Involved in ion flux-mediated turgor regulation. The polypeptide is Mitogen-activated protein kinase hog-1 (hog-1) (Neurospora crassa (strain ATCC 24698 / 74-OR23-1A / CBS 708.71 / DSM 1257 / FGSC 987)).